The primary structure comprises 199 residues: MGYLVPTVIEQSSRGERAYDIYSRLLKDRIIMLTGPVEDGMANSIIAQLLFLDAQDNTKDIYLYVNTPGGSVSAGLAIVDTMNFIKSDVQTIVMGMAASMGTIIASSGTKGKRFMLPNAEYLIHQPMGGTGQGTQQTDMAIVAEQLLKTRKRLEQILADNSNRSLEQIHKDAERDHWMDAKETLEYGFIDEIMENNSLK.

S99 acts as the Nucleophile in catalysis. The active site involves H124.

This sequence belongs to the peptidase S14 family. Fourteen ClpP subunits assemble into 2 heptameric rings which stack back to back to give a disk-like structure with a central cavity, resembling the structure of eukaryotic proteasomes.

Its subcellular location is the cytoplasm. It catalyses the reaction Hydrolysis of proteins to small peptides in the presence of ATP and magnesium. alpha-casein is the usual test substrate. In the absence of ATP, only oligopeptides shorter than five residues are hydrolyzed (such as succinyl-Leu-Tyr-|-NHMec, and Leu-Tyr-Leu-|-Tyr-Trp, in which cleavage of the -Tyr-|-Leu- and -Tyr-|-Trp bonds also occurs).. In terms of biological role, cleaves peptides in various proteins in a process that requires ATP hydrolysis. Has a chymotrypsin-like activity. Plays a major role in the degradation of misfolded proteins. This is ATP-dependent Clp protease proteolytic subunit from Lactococcus lactis subsp. lactis (strain IL1403) (Streptococcus lactis).